A 374-amino-acid chain; its full sequence is WW domain-binding protein 4 (374 aa).

Residues 11–42 (KFCDYCKCWIADNRPSVEFHERGKNHKENVAR) form a Matrin-type zinc finger. A compositionally biased stretch (polar residues) spans 91 to 109 (EPTISPVTNTVQPTPTANQ). Disordered stretches follow at residues 91–126 (EPTI…SKGR) and 188–328 (SKWE…EAGA). The span at 112 to 121 (EKKKKKKKKE) shows a compositional bias: basic residues. WW domains lie at 121 to 154 (EASK…KPEG) and 162 to 195 (TAAK…KPDD). Basic and acidic residues-rich tracts occupy residues 188–197 (SKWEKPDDFI) and 205–270 (SSKD…EKTT). Residues S219, S226, and S228 each carry the phosphoserine modification. Residues 315–325 (STENECLSSSE) are compositionally biased toward polar residues. The interaction with SNRNP200 stretch occupies residues 355-373 (KKRRIENGKSRNLRQRGED).

Component of the spliceosome B complex. Associated with U2 snRNPs. Binds splicing factors SNRPB, SNRPC and SF1. Interacts via the WW domains with the Pro-rich domains of KHDRBS1/SAM68. Interacts via the WW domains with the Pro-rich domains of WBP11. Interacts with SNRNP200.

The protein localises to the nucleus. Its subcellular location is the nucleus speckle. Its function is as follows. Involved in pre-mRNA splicing as a component of the spliceosome. May play a role in cross-intron bridging of U1 and U2 snRNPs in the mammalian A complex. The protein is WW domain-binding protein 4 (Wbp4) of Rattus norvegicus (Rat).